The primary structure comprises 100 residues: uncharacterized protein (100 aa).

The protein belongs to the ycf15 family.

It is found in the plastid. The protein resides in the chloroplast. This is an uncharacterized protein from Panax ginseng (Korean ginseng).